The chain runs to 221 residues: Toll/interleukin-1 receptor domain-containing adapter protein (221 aa).

The segment at 1-82 is disordered; it reads MASSTSLPAP…HASDSGSSRW (82 aa). The span at 48-67 shows a compositional bias: low complexity; it reads SQPTSQDSPLPPSLSSVTSP. Residues 84–213 enclose the TIR domain; the sequence is KDYDVCVCHS…GGFRQVKEAV (130 aa). Cystine bridges form between Cys89/Cys134 and Cys142/Cys174.

As to quaternary structure, homodimer. Also forms heterodimers with MYD88. May interact with PIK3AP1. Interacts with TLR4 and IRAK2 via their respective TIR domains. Interacts with BMX and TBK1. Interacts with EIF2AK2. Does not interact with IRAK1, nor TLR9. Interacts with TLR2. Interacts with RAGE/AGER. In terms of assembly, (Microbial infection) In case of infection, interacts with B.melitensis protein TcpB (AC Q8YF53); TcpB abolishes the TLR4-TIRAP interaction and downstream signaling. Phosphorylated by IRAK1 and IRAK4. Also phosphorylated by BTK. Post-translationally, polyubiquitinated. Polyubiquitination follows phosphorylation by BTK and leads to TIRAP degradation. In terms of tissue distribution, highly expressed in liver, kidney, spleen, skeletal muscle and heart. Also detected in peripheral blood leukocytes, lung, placenta, small intestine, thymus, colon and brain.

Its subcellular location is the cytoplasm. It is found in the cell membrane. The protein localises to the membrane. Its function is as follows. Adapter involved in TLR2, TLR4 and RAGE signaling pathways in the innate immune response. Acts via IRAK2 and TRAF-6, leading to the activation of NF-kappa-B, MAPK1, MAPK3 and JNK, and resulting in cytokine secretion and the inflammatory response. Positively regulates the production of TNF-alpha (TNF) and interleukin-6 (IL6). This chain is Toll/interleukin-1 receptor domain-containing adapter protein (TIRAP), found in Homo sapiens (Human).